The chain runs to 209 residues: Redox-sensing transcriptional repressor Rex (209 aa).

A DNA-binding region (H-T-H motif) is located at residues 16–55 (LYYRFIQNLSLSGKQRVSSAELSEAVKVDSATIRRDFSYF). NAD(+) is bound at residue 90-95 (GVGNLG).

This sequence belongs to the transcriptional regulatory Rex family. Homodimer.

Its subcellular location is the cytoplasm. Functionally, modulates transcription in response to changes in cellular NADH/NAD(+) redox state. In Bacillus cereus (strain Q1), this protein is Redox-sensing transcriptional repressor Rex.